The primary structure comprises 501 residues: Lysine--tRNA ligase (501 aa).

Residues glutamate 402 and glutamate 409 each coordinate Mg(2+).

This sequence belongs to the class-II aminoacyl-tRNA synthetase family. As to quaternary structure, homodimer. The cofactor is Mg(2+).

It is found in the cytoplasm. The catalysed reaction is tRNA(Lys) + L-lysine + ATP = L-lysyl-tRNA(Lys) + AMP + diphosphate. This Helicobacter pylori (strain ATCC 700392 / 26695) (Campylobacter pylori) protein is Lysine--tRNA ligase (lysS).